The sequence spans 546 residues: MKNQFQYCCIVILSVVMLFVSLLIPQASSAAVNGKGMNPDYKAYLMAPLKKIPEVTNWETFENDLRWAKQNGFYAITVDFWWGDMEKNGDQQFDFSYAQRFAQSVKNAGMKMIPIISTHQCGGNVGDDCNVPIPSWVWNQKSDDSLYFKSETGTVNKETLNPLASDVIRKEYGELYTAFAAAMKPYKDVIAKIYLSGGPAGELRYPSYTTSDGTGYPSRGKFQAYTEFAKSKFRLWVLNKYGSLNEVNKAWGTKLISELAILPPSDGEQFLMNGYLSMYGKDYLEWYQGILENHTKLIGELAHNAFDTTFQVPIGAKIAGVHWQYNNPTIPHGAEKPAGYNDYSHLLDAFKSAKLDVTFTCLEMTDKGSYPEYSMPKTLVQNIATLANEKGIVLNGENALSIGNEEEYKRVAEMAFNYNFAGFTLLRYQDVMYNNSLMGKFKDLLGVTPVMQTIVVKNVPTTIGDTVYITGNRAELGSWDTKQYPIQLYYDSHSNDWRGNVVLPAERNIEFKAFIKSKDGTVKSWQTIQQSWNPVPLKTTSHTSSW.

The N-terminal stretch at 1–30 (MKNQFQYCCIVILSVVMLFVSLLIPQASSA) is a signal peptide. Position 79 (Asp79) interacts with substrate. Ca(2+)-binding residues include Glu86, Asp90, and Gln91. Residues His119 and Asp127 each coordinate substrate. Cys121 and Cys129 are oxidised to a cystine. The Ca(2+) site is built by Glu171 and Glu174. Glu202 acts as the Proton donor in catalysis. Residues Lys317, His322, and Thr360 each coordinate substrate. The active-site Proton acceptor is Glu397. Residues 398–399 (NA) and Arg427 each bind substrate. The region spanning 444-546 (LLGVTPVMQT…LKTTSHTSSW (103 aa)) is the CBM20 domain.

It belongs to the glycosyl hydrolase 14 family. In terms of assembly, monomer. Ca(2+) serves as cofactor.

It carries out the reaction Hydrolysis of (1-&gt;4)-alpha-D-glucosidic linkages in polysaccharides so as to remove successive maltose units from the non-reducing ends of the chains.. The chain is Beta-amylase (spoII) from Bacillus cereus.